Consider the following 402-residue polypeptide: Renin (402 aa).

Positions 1–26 (MGGRRMPLWALLLLWTSCSFSLPTDT) are cleaved as a signal peptide. Residues 27 to 64 (ASFGRILLKKMPSVREILEERGVDMTRISAEWGEFIKK) constitute a propeptide, activation peptide. The N-linked (GlcNAc...) asparagine glycan is linked to Asn-69. The Peptidase A1 domain occupies 84-399 (YYGEIGIGTP…DRHNNRIGFA (316 aa)). Asp-102 is an active-site residue. Cys-115 and Cys-122 are joined by a disulfide. A glycan (N-linked (GlcNAc...) asparagine) is linked at Asn-139. Residues Cys-278 and Cys-282 are joined by a disulfide bond. Asp-287 is a catalytic residue. An N-linked (GlcNAc...) asparagine glycan is attached at Asn-320. The cysteines at positions 321 and 358 are disulfide-linked.

The protein belongs to the peptidase A1 family. Interacts with ATP6AP2.

Its subcellular location is the secreted. It localises to the membrane. The enzyme catalyses Cleavage of Leu-|-Xaa bond in angiotensinogen to generate angiotensin I.. With respect to regulation, interaction with ATP6AP2 results in a 5-fold increased efficiency in angiotensinogen processing. In terms of biological role, renin is a highly specific endopeptidase, whose only known function is to generate angiotensin I from angiotensinogen in the plasma, initiating a cascade of reactions that produce an elevation of blood pressure and increased sodium retention by the kidney. In Rattus norvegicus (Rat), this protein is Renin (Ren1).